A 409-amino-acid chain; its full sequence is Autophagy-related protein 37 (409 aa).

Topologically, residues 1-313 (MSESIDRVFV…LKLIKTVIKH (313 aa)) are cytoplasmic. Residues 5–103 (IDRVFVKAIG…LIDTMKQFAS (99 aa)) form the ACB domain. Residues 314-334 (VAIDAVIIAVLVAVIKRSIII) traverse the membrane as a helical segment. Topologically, residues 335 to 409 (PNLISNEISL…VSRIRLIKRN (75 aa)) are peroxisomal.

The protein belongs to the ATG37 family. In terms of assembly, interacts with ATG30 and PEX3. Post-translationally, phosphorylated.

Its subcellular location is the peroxisome membrane. Functionally, acyl-CoA binding protein which acts as the peroxisome receptor for pexophagy. Required for both micropexophagy and macropexophagy, but not for the cytoplasm to vacuole transport (Cvt) or autophagy pathways. Required for functional micropexophagic apparatus (MIPA) and relocation of ATG11 to the peroxisome-sequestering arms of the vacuole. Binds palmitoyl-CoA but not oleyl-CoA. This chain is Autophagy-related protein 37, found in Komagataella phaffii (strain GS115 / ATCC 20864) (Yeast).